We begin with the raw amino-acid sequence, 822 residues long: Anaphase-promoting complex subunit 2 (822 aa).

Serine 218, serine 314, serine 470, serine 534, and serine 697 each carry phosphoserine. The segment at 450–495 is disordered; sequence GDLAVELSKTDPASLETGQDSEDDSGEPEDWVPDPVDADPGKSSSK. A compositionally biased stretch (acidic residues) spans 468-481; that stretch reads QDSEDDSGEPEDWV. Positions 502-700 are cullin homology; sequence ISLLVSIYGS…LLRRRMSVWL (199 aa). Residue tyrosine 810 is modified to Phosphotyrosine.

It belongs to the cullin family. The mammalian APC/C is composed at least of 14 distinct subunits ANAPC1, ANAPC2, CDC27/APC3, ANAPC4, ANAPC5, CDC16/APC6, ANAPC7, CDC23/APC8, ANAPC10, ANAPC11, CDC26/APC12, ANAPC13, ANAPC15 and ANAPC16 that assemble into a complex of at least 19 chains with a combined molecular mass of around 1.2 MDa; APC/C interacts with FZR1 and FBXO5. In the context of the APC/C complex, directly interacts with UBE2C and UBE2S. Interacts (via cullin domain) with ANAPC11 and with UBCH10. Interacts with NEUROD2. Interacts with FBXO43; the interaction is direct.

It functions in the pathway protein modification; protein ubiquitination. Together with the RING-H2 protein ANAPC11, constitutes the catalytic component of the anaphase promoting complex/cyclosome (APC/C), a cell cycle-regulated E3 ubiquitin ligase that controls progression through mitosis and the G1 phase of the cell cycle. The APC/C complex acts by mediating ubiquitination and subsequent degradation of target proteins: it mainly mediates the formation of 'Lys-11'-linked polyubiquitin chains and, to a lower extent, the formation of 'Lys-48'- and 'Lys-63'-linked polyubiquitin chains. The APC/C complex catalyzes assembly of branched 'Lys-11'-/'Lys-48'-linked branched ubiquitin chains on target proteins. The CDC20-APC/C complex positively regulates the formation of synaptic vesicle clustering at active zone to the presynaptic membrane in postmitotic neurons. CDC20-APC/C-induced degradation of NEUROD2 drives presynaptic differentiation. The protein is Anaphase-promoting complex subunit 2 (ANAPC2) of Homo sapiens (Human).